A 118-amino-acid chain; its full sequence is UPF0342 protein BpOF4_11360 (118 aa).

Belongs to the UPF0342 family.

The chain is UPF0342 protein BpOF4_11360 from Alkalihalophilus pseudofirmus (strain ATCC BAA-2126 / JCM 17055 / OF4) (Bacillus pseudofirmus).